The sequence spans 342 residues: S-adenosylmethionine:tRNA ribosyltransferase-isomerase (342 aa).

This sequence belongs to the QueA family. Monomer.

The protein resides in the cytoplasm. It catalyses the reaction 7-aminomethyl-7-carbaguanosine(34) in tRNA + S-adenosyl-L-methionine = epoxyqueuosine(34) in tRNA + adenine + L-methionine + 2 H(+). The protein operates within tRNA modification; tRNA-queuosine biosynthesis. Its function is as follows. Transfers and isomerizes the ribose moiety from AdoMet to the 7-aminomethyl group of 7-deazaguanine (preQ1-tRNA) to give epoxyqueuosine (oQ-tRNA). The protein is S-adenosylmethionine:tRNA ribosyltransferase-isomerase of Moorella thermoacetica (strain ATCC 39073 / JCM 9320).